A 1029-amino-acid chain; its full sequence is Protein phosphatase 1 regulatory subunit 12A (1029 aa).

The KVKF motif motif lies at Lys35–Phe38. ANK repeat units lie at residues Asp39–Tyr68, Asp72–Gln101, Glu105–Ala134, Glu138–Val164, Ser198–Ile227, and Asp231–Thr260. A (3S)-3-hydroxyasparagine; by HIF1AN mark is found at Asn67 and Asn100. Asn226 carries the post-translational modification (3S)-3-hydroxyasparagine; by HIF1AN. The interval Leu290 to Leu786 is disordered. A compositionally biased stretch (basic and acidic residues) spans His291 to Pro300. A Phosphoserine modification is found at Ser299. Residues Ile302 to Gln314 are compositionally biased toward polar residues. Residues Lys318–Ser353 are compositionally biased toward basic and acidic residues. Acidic residues predominate over residues Ser357–Ala369. Positions Thr385 to Ser402 are enriched in low complexity. 2 positions are modified to phosphoserine: Ser422 and Ser432. Residues Ser422 to Ser432 show a composition bias toward basic and acidic residues. A Phosphothreonine modification is found at Thr443. Ser445 is subject to Phosphoserine; by NUAK1. Tyr446 is subject to Phosphotyrosine. Residues Arg469–Leu480 show a composition bias toward low complexity. Ser472 is subject to Phosphoserine; by NUAK1. The residue at position 473 (Ser473) is a Phosphoserine; by CDK1. Ser477 is modified (phosphoserine). Over residues Asp481–Gly491 the composition is skewed to basic and acidic residues. Phosphoserine is present on residues Ser507 and Ser509. Over residues Asn540–Arg551 the composition is skewed to polar residues. A compositionally biased stretch (low complexity) spans Ser564–Ser578. Polar residues predominate over residues Ser585–Ala594. The segment covering Thr596–Ser610 has biased composition (low complexity). Phosphoserine is present on residues Ser601 and Ser618. A compositionally biased stretch (basic and acidic residues) spans Trp614–Ser625. The span at Ala626 to Thr656 shows a compositional bias: low complexity. Over residues Val671 to Arg680 the composition is skewed to basic and acidic residues. The interaction with ROCK2 stretch occupies residues Arg680 to Glu863. Positions Lys681–Arg691 are enriched in basic residues. Residues Ser690 and Ser693 each carry the phosphoserine; by PKA and PKG; in vitro modification. A Phosphothreonine; by ROCK1, ROCK2, CDC42BP, ZIPK/DAPK3 and RAF1 modification is found at Thr694. Positions Arg716 to Thr765 are enriched in basic and acidic residues. A compositionally biased stretch (low complexity) spans Ser771–Leu786. A Phosphoserine modification is found at Ser801. Residues Ala808–Asp927 are disordered. Residues Leu813–Ile839 are compositionally biased toward basic and acidic residues. Basic residues predominate over residues Arg840 to Ser851. Ser851 bears the Phosphoserine; by ROCK2 mark. Phosphoserine is present on residues Ser861 and Ser870. Residues Gln866 to Gln882 show a composition bias toward basic and acidic residues. Low complexity predominate over residues Thr883–Ser897. Phosphoserine occurs at positions 902 and 907. Residue Ser909 is modified to Phosphoserine; by NUAK1. Residues Leu913–Asp927 show a composition bias toward basic and acidic residues. At Ser994 the chain carries Phosphoserine.

In terms of assembly, PP1 comprises a catalytic subunit, PPP1CA, PPP1CB or PPP1CC, and one or several targeting or regulatory subunits. PPP1R12A mediates binding to myosin. Interacts with ARHA and CIT. Binds PPP1R12B, ROCK1 and IL16. Interacts directly with PRKG1. Non-covalent dimer of 2 dimers; PRKG1-PRKG1 and PPP1R12A-PPP1R12A. Interacts with SMTNL1. Interacts with PPP1CB; the interaction is direct. Interacts (when phosphorylated at Ser-445, Ser-472 and Ser-910) with 14-3-3. Interacts with ROCK1 and ROCK2. Interacts with isoform 1 and isoform 2 of ZIPK/DAPK3. Interacts with RAF1. Interacts with HIF1AN. Interacts with NCKAP1L. In terms of processing, phosphorylated by CIT (Rho-associated kinase). Phosphorylated cooperatively by ROCK1 and CDC42BP on Thr-694. Phosphorylated on upon DNA damage, probably by ATM or ATR. In vitro, phosphorylation of Ser-693 by PKA and PKG appears to prevent phosphorylation of the inhibitory site Thr-694, probably mediated by PRKG1. Phosphorylation at Ser-445, Ser-472 and Ser-909 by NUAK1 promotes interaction with 14-3-3, leading to inhibit interaction with myosin light chain MLC2, preventing dephosphorylation of MLC2. May be phosphorylated at Thr-694 by DMPK; may inhibit the myosin phosphatase activity. Phosphorylated at Ser-473 by CDK1 during mitosis, creating docking sites for the POLO box domains of PLK1. Subsequently, PLK1 binds and phosphorylates PPP1R12A. In terms of tissue distribution, expressed in striated and vascular smooth muscle, specificcally in type 2a fibers (at protein level). Expression levels are 20-30% higher in developed males than females (at protein level).

It is found in the cytoplasm. The protein localises to the cytoskeleton. It localises to the stress fiber. Its function is as follows. Key regulator of protein phosphatase 1C (PPP1C). Mediates binding to myosin. As part of the PPP1C complex, involved in dephosphorylation of PLK1. Capable of inhibiting HIF1AN-dependent suppression of HIF1A activity. This Mus musculus (Mouse) protein is Protein phosphatase 1 regulatory subunit 12A.